Here is a 37-residue protein sequence, read N- to C-terminus: Large ribosomal subunit protein bL36 (37 aa).

It belongs to the bacterial ribosomal protein bL36 family.

The chain is Large ribosomal subunit protein bL36 from Natranaerobius thermophilus (strain ATCC BAA-1301 / DSM 18059 / JW/NM-WN-LF).